The sequence spans 272 residues: Catabolic 3-dehydroquinate dehydratase (272 aa).

3-dehydroquinate contacts are provided by residues 66 to 68 and R102; that span reads EFR. H163 functions as the Proton donor/acceptor in the catalytic mechanism. The active-site Schiff-base intermediate with substrate is K190. 3-dehydroquinate is bound by residues R232, S251, and Q255.

It belongs to the type-I 3-dehydroquinase family.

The catalysed reaction is 3-dehydroquinate = 3-dehydroshikimate + H2O. It participates in aromatic compound metabolism; 3,4-dihydroxybenzoate biosynthesis; 3,4-dihydroxybenzoate from 3-dehydroquinate: step 1/2. Functionally, involved in the biosynthesis of protocatechuate. Catalyzes the catabolic dehydration of 3-dehydroquinate (DHQ) to yield 3-dehydroshikimate. This chain is Catabolic 3-dehydroquinate dehydratase, found in Acinetobacter baylyi (strain ATCC 33305 / BD413 / ADP1).